Reading from the N-terminus, the 494-residue chain is BTB/POZ domain and ankyrin repeat-containing protein NH5.1 (494 aa).

In terms of domain architecture, BTB spans 25–130 (SDVAFSVEGR…LYSGQASVAA (106 aa)). A disordered region spans residues 60–94 (NHQPPPPPPPLNWPMAGGGGGGSGGGGRGGAGGGG). A compositionally biased stretch (pro residues) spans 61-71 (HQPPPPPPPLN). The span at 75-94 (AGGGGGGSGGGGRGGAGGGG) shows a compositional bias: gly residues. The C2HC NPR-type zinc finger occupies 136–150 (LPGCGARGCWHTRCG). Cys-139, Cys-144, His-146, and Cys-149 together coordinate Zn(2+). ANK repeat units lie at residues 274 to 302 (NKIR…GLDL), 303 to 333 (DDAL…DVNS), 338 to 367 (TGKT…DPNS), and 371 to 405 (DGVT…KLRL). 2 disordered regions span residues 421 to 443 (DGAP…PRSD) and 469 to 494 (AAGE…NGFA).

The protein belongs to the plant 'ANKYRIN-BTB/POZ' family. 'NOOT-BOP-COCH-like' (NBCL) subfamily. Homodimer. Interacts with TGAL5, TGAL7, TGAL8 and TGAL9.

The protein localises to the nucleus. The protein resides in the cytoplasm. It participates in protein modification; protein ubiquitination. Functionally, may act as a substrate-specific adapter of an E3 ubiquitin-protein ligase complex (CUL3-RBX1-BTB) which mediates the ubiquitination and subsequent proteasomal degradation of target proteins. Transcriptional co-regulator involved in the promotion of leaf and floral meristem fate and determinacy. Required for the abscission of senescent organs, probably by regulating the cell wall disorganization in abscission zones (AZs, e.g. pulvini at the base of leaves). In Oryza sativa subsp. japonica (Rice), this protein is BTB/POZ domain and ankyrin repeat-containing protein NH5.1.